The sequence spans 184 residues: NADH-quinone oxidoreductase subunit B 1 (184 aa).

Positions 37, 38, 103, and 132 each coordinate [4Fe-4S] cluster.

It belongs to the complex I 20 kDa subunit family. In terms of assembly, NDH-1 is composed of 14 different subunits. Subunits NuoB, C, D, E, F, and G constitute the peripheral sector of the complex. [4Fe-4S] cluster is required as a cofactor.

The protein resides in the cell membrane. It catalyses the reaction a quinone + NADH + 5 H(+)(in) = a quinol + NAD(+) + 4 H(+)(out). Its function is as follows. NDH-1 shuttles electrons from NADH, via FMN and iron-sulfur (Fe-S) centers, to quinones in the respiratory chain. The immediate electron acceptor for the enzyme in this species is believed to be a menaquinone. Couples the redox reaction to proton translocation (for every two electrons transferred, four hydrogen ions are translocated across the cytoplasmic membrane), and thus conserves the redox energy in a proton gradient. This is NADH-quinone oxidoreductase subunit B 1 from Streptomyces griseus subsp. griseus (strain JCM 4626 / CBS 651.72 / NBRC 13350 / KCC S-0626 / ISP 5235).